The chain runs to 133 residues: Succinate dehydrogenase assembly factor 3, mitochondrial (133 aa).

Residues 1 to 12 constitute a mitochondrion transit peptide; sequence MNNKLIYRSVRF.

It belongs to the complex I LYR family. SDHAF3 subfamily. As to quaternary structure, interacts with SDH2 within an SDH1-SDH2 subcomplex.

The protein resides in the mitochondrion. Its subcellular location is the mitochondrion intermembrane space. The protein localises to the mitochondrion matrix. Plays an essential role in the assembly of succinate dehydrogenase (SDH), an enzyme complex (also referred to as respiratory complex II) that is a component of both the tricarboxylic acid (TCA) cycle and the mitochondrial electron transport chain, and which couples the oxidation of succinate to fumarate with the reduction of ubiquinone (coenzyme Q) to ubiquinol. Promotes maturation of the iron-sulfur protein subunit SDH2 of the SDH catalytic dimer, protecting it from the deleterious effects of oxidants. Acts together with SDHAF1 (SDH6). The chain is Succinate dehydrogenase assembly factor 3, mitochondrial from Saccharomyces cerevisiae (strain ATCC 204508 / S288c) (Baker's yeast).